Consider the following 509-residue polypeptide: tRNA-2-methylthio-N(6)-dimethylallyladenosine synthase (509 aa).

The segment covering 1-15 (MNEQQRLASQQVNSS) has biased composition (polar residues). Residues 1–26 (MNEQQRLASQQVNSSTKKEEKDYSKY) form a disordered region. Residues 16 to 25 (TKKEEKDYSK) are compositionally biased toward basic and acidic residues. The region spanning 66-184 (RKFYIRTYGC…LPYILKDAMF (119 aa)) is the MTTase N-terminal domain. Cys-75, Cys-111, Cys-145, Cys-221, Cys-225, and Cys-228 together coordinate [4Fe-4S] cluster. The region spanning 207–437 (RRGDIKAWVN…NALVNKLAIE (231 aa)) is the Radical SAM core domain. The TRAM domain maps to 440–503 (NRYKGQIVEV…TWSLNGELVE (64 aa)).

This sequence belongs to the methylthiotransferase family. MiaB subfamily. Monomer. The cofactor is [4Fe-4S] cluster.

Its subcellular location is the cytoplasm. It carries out the reaction N(6)-dimethylallyladenosine(37) in tRNA + (sulfur carrier)-SH + AH2 + 2 S-adenosyl-L-methionine = 2-methylsulfanyl-N(6)-dimethylallyladenosine(37) in tRNA + (sulfur carrier)-H + 5'-deoxyadenosine + L-methionine + A + S-adenosyl-L-homocysteine + 2 H(+). Functionally, catalyzes the methylthiolation of N6-(dimethylallyl)adenosine (i(6)A), leading to the formation of 2-methylthio-N6-(dimethylallyl)adenosine (ms(2)i(6)A) at position 37 in tRNAs that read codons beginning with uridine. This Bacillus cereus (strain AH187) protein is tRNA-2-methylthio-N(6)-dimethylallyladenosine synthase.